Reading from the N-terminus, the 405-residue chain is Fragilysin (405 aa).

The first 25 residues, 1–25 (MFILNFNKMKNVKLLLMLGTAALLA), serve as a signal peptide directing secretion. H356 is a Zn(2+) binding site. E357 is a catalytic residue. 2 residues coordinate Zn(2+): H360 and H366.

Belongs to the peptidase M10C family. The cofactor is Zn(2+).

It is found in the secreted. The enzyme catalyses Broad proteolytic specificity, bonds hydrolyzed includes -Gly-|-Leu-, -Met-|-Leu-, -Phe-|-Leu-, -Cys-|-Leu-, -Leu-|-Gly-.. Functionally, diarrheal toxin that hydrolyzes gelatin, azocoll, actin, tropomyosin, and fibrinogen. The polypeptide is Fragilysin (btfP) (Bacteroides fragilis).